The primary structure comprises 123 residues: Small ribosomal subunit protein uS12 (123 aa).

Residue Asp89 is modified to 3-methylthioaspartic acid.

This sequence belongs to the universal ribosomal protein uS12 family. As to quaternary structure, part of the 30S ribosomal subunit. Contacts proteins S8 and S17. May interact with IF1 in the 30S initiation complex.

In terms of biological role, with S4 and S5 plays an important role in translational accuracy. Functionally, interacts with and stabilizes bases of the 16S rRNA that are involved in tRNA selection in the A site and with the mRNA backbone. Located at the interface of the 30S and 50S subunits, it traverses the body of the 30S subunit contacting proteins on the other side and probably holding the rRNA structure together. The combined cluster of proteins S8, S12 and S17 appears to hold together the shoulder and platform of the 30S subunit. This is Small ribosomal subunit protein uS12 from Rhizobium meliloti (strain 1021) (Ensifer meliloti).